Consider the following 186-residue polypeptide: uncharacterized protein (186 aa).

The segment at 121–146 (TSPLLKKNKPSSDQDDTSKQSFDQDE) is disordered.

It belongs to the chlamydial CPn_0422/CT_273/TC_0545 family.

This is an uncharacterized protein from Chlamydia muridarum (strain MoPn / Nigg).